We begin with the raw amino-acid sequence, 169 residues long: Peptide deformylase (169 aa).

The Fe cation site is built by cysteine 91 and histidine 133. The active site involves glutamate 134. Histidine 137 is a Fe cation binding site.

It belongs to the polypeptide deformylase family. The cofactor is Fe(2+).

It carries out the reaction N-terminal N-formyl-L-methionyl-[peptide] + H2O = N-terminal L-methionyl-[peptide] + formate. Functionally, removes the formyl group from the N-terminal Met of newly synthesized proteins. Requires at least a dipeptide for an efficient rate of reaction. N-terminal L-methionine is a prerequisite for activity but the enzyme has broad specificity at other positions. This Serratia proteamaculans (strain 568) protein is Peptide deformylase.